The chain runs to 119 residues: Toxin ICK-8 (119 aa).

An N-terminal signal peptide occupies residues 1–19 (MMKLYSLVIIATLAAAAFA). Cystine bridges form between Cys-59-Cys-74, Cys-67-Cys-80, Cys-71-Cys-116, and Cys-73-Cys-87.

Belongs to the neurotoxin 25 family. ICK-8 subfamily. In terms of tissue distribution, expressed by the venom gland.

Its subcellular location is the secreted. Functionally, ion channel inhibitor. This Trittame loki (Brush-footed trapdoor spider) protein is Toxin ICK-8.